Consider the following 254-residue polypeptide: 3-deoxy-manno-octulosonate cytidylyltransferase (254 aa).

The protein belongs to the KdsB family.

It localises to the cytoplasm. The enzyme catalyses 3-deoxy-alpha-D-manno-oct-2-ulosonate + CTP = CMP-3-deoxy-beta-D-manno-octulosonate + diphosphate. Its pathway is nucleotide-sugar biosynthesis; CMP-3-deoxy-D-manno-octulosonate biosynthesis; CMP-3-deoxy-D-manno-octulosonate from 3-deoxy-D-manno-octulosonate and CTP: step 1/1. The protein operates within bacterial outer membrane biogenesis; lipopolysaccharide biosynthesis. Activates KDO (a required 8-carbon sugar) for incorporation into bacterial lipopolysaccharide in Gram-negative bacteria. The protein is 3-deoxy-manno-octulosonate cytidylyltransferase of Chlamydia caviae (strain ATCC VR-813 / DSM 19441 / 03DC25 / GPIC) (Chlamydophila caviae).